We begin with the raw amino-acid sequence, 64 residues long: Large ribosomal subunit protein bL35 (64 aa).

Belongs to the bacterial ribosomal protein bL35 family.

The protein is Large ribosomal subunit protein bL35 of Carboxydothermus hydrogenoformans (strain ATCC BAA-161 / DSM 6008 / Z-2901).